The primary structure comprises 697 residues: Elongation factor G 2 (697 aa).

The tr-type G domain occupies 6-281; it reads TNYRNFGIFA…AVVDFLPNPT (276 aa). Residues 15–22, 79–83, and 133–136 contribute to the GTP site; these read AHVDAGKT, DTPGH, and NKLD.

The protein belongs to the TRAFAC class translation factor GTPase superfamily. Classic translation factor GTPase family. EF-G/EF-2 subfamily.

It localises to the cytoplasm. Functionally, catalyzes the GTP-dependent ribosomal translocation step during translation elongation. During this step, the ribosome changes from the pre-translocational (PRE) to the post-translocational (POST) state as the newly formed A-site-bound peptidyl-tRNA and P-site-bound deacylated tRNA move to the P and E sites, respectively. Catalyzes the coordinated movement of the two tRNA molecules, the mRNA and conformational changes in the ribosome. The sequence is that of Elongation factor G 2 from Trichodesmium erythraeum (strain IMS101).